Here is a 433-residue protein sequence, read N- to C-terminus: Zinc finger and SCAN domain-containing protein 4 (433 aa).

The SCAN box domain maps to 44–126 (RMVLNSFQDS…RFMEDLTDDS (83 aa)). Polar residues-rich tracts occupy residues 162–184 (SAQT…TSLE) and 277–298 (QPEQ…NSTC). 2 disordered regions span residues 162-199 (SAQT…CNSS) and 272-298 (AGCI…NSTC). C2H2-type zinc fingers lie at residues 312-334 (YKCE…QRRH), 340-362 (FVCP…QIIH), 368-390 (FTCS…ERIH), and 396-418 (YTCP…MRTH). Residues 414 to 433 (HMRTHEKITPPSVPSTPEAS) are disordered.

The protein resides in the nucleus. It is found in the chromosome. The protein localises to the telomere. Embryonic stem (ES) cell-specific transcription factor required to regulate ES cell pluripotency. Binds telomeres and plays a key role in genomic stability in ES cells by regulating telomere elongation. Acts as an activator of spontaneous telomere sister chromatid exchange (T-SCE) and telomere elongation in undifferentiated ES cells. This Pongo pygmaeus (Bornean orangutan) protein is Zinc finger and SCAN domain-containing protein 4 (ZSCAN4).